The following is a 91-amino-acid chain: Cytochrome b-c1 complex subunit 6, mitochondrial (91 aa).

A compositionally biased stretch (basic and acidic residues) spans 1–10; sequence MGLEDERKML. The N-terminal 13 residues, 1-13, are a transit peptide targeting the mitochondrion; the sequence is MGLEDERKMLTES. The segment at 1–30 is disordered; it reads MGLEDERKMLTESGDPEKEEEEEEELVDPL. Residues 17–27 are compositionally biased toward acidic residues; sequence EKEEEEEEELV. 2 disulfide bridges follow: C37-C81 and C53-C67. At K42 the chain carries N6-acetyllysine. K85 is subject to N6-acetyllysine.

It belongs to the UQCRH/QCR6 family. Component of the ubiquinol-cytochrome c oxidoreductase (cytochrome b-c1 complex, complex III, CIII), a multisubunit enzyme composed of 11 subunits. The complex is composed of 3 respiratory subunits cytochrome b, cytochrome c1 and Rieske protein UQCRFS1, 2 core protein subunits UQCRC1/QCR1 and UQCRC2/QCR2, and 6 low-molecular weight protein subunits UQCRH/QCR6, UQCRB/QCR7, UQCRQ/QCR8, UQCR10/QCR9, UQCR11/QCR10 and subunit 9, the cleavage product of Rieske protein UQCRFS1. The complex exists as an obligatory dimer and forms supercomplexes (SCs) in the inner mitochondrial membrane with NADH-ubiquinone oxidoreductase (complex I, CI) and cytochrome c oxidase (complex IV, CIV), resulting in different assemblies (supercomplex SCI(1)III(2)IV(1) and megacomplex MCI(2)III(2)IV(2)).

It is found in the mitochondrion inner membrane. Component of the ubiquinol-cytochrome c oxidoreductase, a multisubunit transmembrane complex that is part of the mitochondrial electron transport chain which drives oxidative phosphorylation. The respiratory chain contains 3 multisubunit complexes succinate dehydrogenase (complex II, CII), ubiquinol-cytochrome c oxidoreductase (cytochrome b-c1 complex, complex III, CIII) and cytochrome c oxidase (complex IV, CIV), that cooperate to transfer electrons derived from NADH and succinate to molecular oxygen, creating an electrochemical gradient over the inner membrane that drives transmembrane transport and the ATP synthase. The cytochrome b-c1 complex catalyzes electron transfer from ubiquinol to cytochrome c, linking this redox reaction to translocation of protons across the mitochondrial inner membrane, with protons being carried across the membrane as hydrogens on the quinol. In the process called Q cycle, 2 protons are consumed from the matrix, 4 protons are released into the intermembrane space and 2 electrons are passed to cytochrome c. The chain is Cytochrome b-c1 complex subunit 6, mitochondrial (UQCRH) from Macaca fascicularis (Crab-eating macaque).